The chain runs to 83 residues: MKTIFLGLIHIYQRFISPLTPATCRFYPTCSEYTREAIVVYGPFKGTWLGIKRISKCHPLHKGGFDPVPLKKTKHKKDKNINK.

The protein belongs to the UPF0161 family.

It is found in the cell membrane. In terms of biological role, could be involved in insertion of integral membrane proteins into the membrane. In Staphylococcus saprophyticus subsp. saprophyticus (strain ATCC 15305 / DSM 20229 / NCIMB 8711 / NCTC 7292 / S-41), this protein is Putative membrane protein insertion efficiency factor.